A 320-amino-acid polypeptide reads, in one-letter code: Polyprenal reductase 1 (320 aa).

6 helical membrane-spanning segments follow: residues 5–25 (IVWL…LPLV), 64–84 (FFGH…AATW), 143–163 (MHIL…LSLC), 200–220 (PLMK…WGWI), 243–263 (IIPY…AEIV), and 266–286 (LGLL…FGFV).

The protein belongs to the steroid 5-alpha reductase family. Polyprenal reductase subfamily. As to expression, expressed in roots and flowers.

It is found in the cell membrane. The catalysed reaction is a di-trans,poly-cis-dolichal + NADP(+) = a di-trans,poly-cis-polyprenal + NADPH + H(+). The protein operates within protein modification; protein glycosylation. Functionally, plays a key role in early steps of protein N-linked glycosylation by being involved in the conversion of polyprenol into dolichol. Acts as a polyprenal reductase that mediates the reduction of polyprenal into dolichal in a NADP-dependent mechanism. Dolichols are required for the synthesis of dolichol-linked monosaccharides and the oligosaccharide precursor used for N-glycosylation. Involved in the regulation of plant growth and reproductive processes. The sequence is that of Polyprenal reductase 1 from Arabidopsis thaliana (Mouse-ear cress).